A 27-amino-acid polypeptide reads, in one-letter code: Defensin-like protein 2 (27 aa).

Gln-1 is modified (pyrrolidone carboxylic acid).

Belongs to the DEFL family. Forms oligomers in its native state.

In terms of biological role, possesses some antifungal activity sensitive to inorganic cations and antibacterial activity against B.megaterium. The chain is Defensin-like protein 2 from Brassica campestris (Field mustard).